The primary structure comprises 199 residues: Insertion sequence IS21-like putative ATP-binding protein (199 aa).

114-121 (GDSGTGKT) is an ATP binding site.

Belongs to the IS21/IS1162 putative ATP-binding protein family.

This Bacteroides fragilis (strain YCH46) protein is Insertion sequence IS21-like putative ATP-binding protein (tnpB).